A 274-amino-acid polypeptide reads, in one-letter code: Sulfur carrier protein FdhD (274 aa).

Residue Cys121 is the Cysteine persulfide intermediate of the active site. Phe258–Arg263 lines the Mo-bis(molybdopterin guanine dinucleotide) pocket.

It belongs to the FdhD family.

It is found in the cytoplasm. Required for formate dehydrogenase (FDH) activity. Acts as a sulfur carrier protein that transfers sulfur from IscS to the molybdenum cofactor prior to its insertion into FDH. This Yersinia pseudotuberculosis serotype O:1b (strain IP 31758) protein is Sulfur carrier protein FdhD.